A 780-amino-acid polypeptide reads, in one-letter code: Aconitate hydratase, mitochondrial (780 aa).

A mitochondrion-targeting transit peptide spans 1 to 27; it reads MAPYSLLVSRLQKALGARQYHVASVLC. K31 carries the post-translational modification N6-succinyllysine. K50 bears the N6-acetyllysine; alternate mark. K50 bears the N6-succinyllysine; alternate mark. A substrate-binding site is contributed by Q99. K138 and K144 each carry N6-acetyllysine; alternate. K138 and K144 each carry N6-succinyllysine; alternate. 192 to 194 serves as a coordination point for substrate; the sequence is DSH. Residue K233 is modified to N6-acetyllysine; alternate. N6-succinyllysine; alternate is present on K233. A [4Fe-4S] cluster-binding site is contributed by C385. K411 carries the post-translational modification N6-succinyllysine. The [4Fe-4S] cluster site is built by C448 and C451. Substrate contacts are provided by R474 and R479. N6-acetyllysine; alternate is present on residues K517 and K523. An N6-succinyllysine; alternate mark is found at K517 and K523. Residues 524–537 show a composition bias toward basic and acidic residues; that stretch reads LEAPDADELPRAEF. The tract at residues 524-560 is disordered; it reads LEAPDADELPRAEFDPGQDTYQHPPKDSSGQQVDVSP. N6-succinyllysine is present on K549. Residues 551-560 are compositionally biased toward polar residues; the sequence is SSGQQVDVSP. S559 is subject to Phosphoserine. K573 carries the post-translational modification N6-acetyllysine; alternate. An N6-succinyllysine; alternate modification is found at K573. K591 carries the post-translational modification N6-succinyllysine. At K605 the chain carries N6-acetyllysine; alternate. Position 605 is an N6-succinyllysine; alternate (K605). A substrate-binding site is contributed by R607. Residue K628 is modified to N6-succinyllysine. S670 is subject to Phosphoserine. 670–671 contributes to the substrate binding site; that stretch reads SR. The residue at position 689 (K689) is an N6-succinyllysine. Residues K723 and K730 each carry the N6-acetyllysine; alternate modification. N6-succinyllysine; alternate is present on residues K723 and K730. 2 positions are modified to N6-acetyllysine: K736 and K743.

This sequence belongs to the aconitase/IPM isomerase family. Monomer. [4Fe-4S] cluster is required as a cofactor. Forms covalent cross-links mediated by transglutaminase TGM2, between a glutamine and the epsilon-amino group of a lysine residue, forming homopolymers and heteropolymers.

The protein resides in the mitochondrion. It catalyses the reaction citrate = D-threo-isocitrate. Its pathway is carbohydrate metabolism; tricarboxylic acid cycle; isocitrate from oxaloacetate: step 2/2. Catalyzes the isomerization of citrate to isocitrate via cis-aconitate. This is Aconitate hydratase, mitochondrial (ACO2) from Bos taurus (Bovine).